The chain runs to 97 residues: UPF0147 protein MA_0092 (97 aa).

It belongs to the UPF0147 family.

This is UPF0147 protein MA_0092 from Methanosarcina acetivorans (strain ATCC 35395 / DSM 2834 / JCM 12185 / C2A).